Here is a 400-residue protein sequence, read N- to C-terminus: Peptidoglycan hydrolase FlgJ (400 aa).

Disordered regions lie at residues 112–155 (KQGS…GRDD) and 204–229 (PAAS…QPPL). Residues 238–400 (SADEFIATML…VAAAGTPPLG (163 aa)) form a catalytic region. Catalysis depends on residues glutamate 310 and aspartate 335.

This sequence in the N-terminal section; belongs to the FlgJ family. It in the C-terminal section; belongs to the glycosyl hydrolase 73 family.

It localises to the periplasm. Functionally, flagellum-specific muramidase which hydrolyzes the peptidoglycan layer to assemble the rod structure in the periplasmic space. The chain is Peptidoglycan hydrolase FlgJ (flgJ) from Pseudomonas aeruginosa (strain ATCC 15692 / DSM 22644 / CIP 104116 / JCM 14847 / LMG 12228 / 1C / PRS 101 / PAO1).